Reading from the N-terminus, the 164-residue chain is NADH-quinone oxidoreductase subunit B (164 aa).

[4Fe-4S] cluster contacts are provided by Cys38, Cys39, Cys104, and Cys133.

It belongs to the complex I 20 kDa subunit family. In terms of assembly, NDH-1 is composed of 14 different subunits. Subunits NuoB, C, D, E, F, and G constitute the peripheral sector of the complex. The cofactor is [4Fe-4S] cluster.

It localises to the cell inner membrane. The enzyme catalyses a quinone + NADH + 5 H(+)(in) = a quinol + NAD(+) + 4 H(+)(out). NDH-1 shuttles electrons from NADH, via FMN and iron-sulfur (Fe-S) centers, to quinones in the respiratory chain. The immediate electron acceptor for the enzyme in this species is believed to be ubiquinone. Couples the redox reaction to proton translocation (for every two electrons transferred, four hydrogen ions are translocated across the cytoplasmic membrane), and thus conserves the redox energy in a proton gradient. The chain is NADH-quinone oxidoreductase subunit B from Protochlamydia amoebophila (strain UWE25).